Here is a 152-residue protein sequence, read N- to C-terminus: Transcriptional regulator MraZ (152 aa).

SpoVT-AbrB domains are found at residues 7 to 51 (KERH…APDR) and 89 to 132 (LEMV…DPQR).

Belongs to the MraZ family. In terms of assembly, forms oligomers.

The protein localises to the cytoplasm. Its subcellular location is the nucleoid. The polypeptide is Transcriptional regulator MraZ (Pelodictyon phaeoclathratiforme (strain DSM 5477 / BU-1)).